The chain runs to 198 residues: IMP cyclohydrolase (198 aa).

It belongs to the archaeal IMP cyclohydrolase family.

The catalysed reaction is IMP + H2O = 5-formamido-1-(5-phospho-D-ribosyl)imidazole-4-carboxamide. Its pathway is purine metabolism; IMP biosynthesis via de novo pathway; IMP from 5-formamido-1-(5-phospho-D-ribosyl)imidazole-4-carboxamide: step 1/1. Catalyzes the cyclization of 5-formylamidoimidazole-4-carboxamide ribonucleotide to IMP. This chain is IMP cyclohydrolase, found in Methanopyrus kandleri (strain AV19 / DSM 6324 / JCM 9639 / NBRC 100938).